We begin with the raw amino-acid sequence, 229 residues long: Large ribosomal subunit protein uL1 (229 aa).

This sequence belongs to the universal ribosomal protein uL1 family. In terms of assembly, part of the 50S ribosomal subunit.

Its function is as follows. Binds directly to 23S rRNA. The L1 stalk is quite mobile in the ribosome, and is involved in E site tRNA release. Functionally, protein L1 is also a translational repressor protein, it controls the translation of the L11 operon by binding to its mRNA. The sequence is that of Large ribosomal subunit protein uL1 from Actinobacillus pleuropneumoniae serotype 3 (strain JL03).